A 173-amino-acid polypeptide reads, in one-letter code: Shikimate kinase 1 (173 aa).

Position 14–19 (Gly14–Thr19) interacts with ATP. Mg(2+) is bound at residue Ser18. Positions 36, 60, and 82 each coordinate substrate. Arg120 contacts ATP. Arg140 provides a ligand contact to substrate. ATP is bound at residue Gln157.

The protein belongs to the shikimate kinase family. Monomer. Mg(2+) is required as a cofactor.

It is found in the cytoplasm. It catalyses the reaction shikimate + ATP = 3-phosphoshikimate + ADP + H(+). The protein operates within metabolic intermediate biosynthesis; chorismate biosynthesis; chorismate from D-erythrose 4-phosphate and phosphoenolpyruvate: step 5/7. Functionally, catalyzes the specific phosphorylation of the 3-hydroxyl group of shikimic acid using ATP as a cosubstrate. This is Shikimate kinase 1 from Citrobacter koseri (strain ATCC BAA-895 / CDC 4225-83 / SGSC4696).